We begin with the raw amino-acid sequence, 282 residues long: MAATVGVSLKRGFPAAVLGRVGLQFQACRGAQTAAAAAPRIKKFAIYRWDPDKTGDKPRMQTYEVDLNKCGPMVLDALIKIKNEVDSTLTFRRSCREGICGSCAMNINGGNTLACTRRIDTDLSKVSKIYPLPHMYVIKDLVPDLSNFYAQYKSIEPYLKKKDESQEGKQQYLQSIEDREKLDGLYECILCACCSTSCPSYWWNGDKYLGPAVLMQAYRWMIDSRDDFTEERLAKLQDPFSVYRCHTIMNCTQTCPKGLNPGKAIAEIKKMMATYKEKRALA.

The transit peptide at 1-30 (MAATVGVSLKRGFPAAVLGRVGLQFQACRG) directs the protein to the mitochondrion. The 2Fe-2S ferredoxin-type domain occupies 42–135 (KKFAIYRWDP…VSKIYPLPHM (94 aa)). An N6-acetyllysine mark is found at K53 and K57. Positions 95, 100, 103, and 115 each coordinate [2Fe-2S] cluster. Positions 148 to 220 (FYAQYKSIEP…PAVLMQAYRW (73 aa)) are interaction with SDHAF1. The 4Fe-4S ferredoxin-type domain maps to 178-208 (DREKLDGLYECILCACCSTSCPSYWWNGDKY). Residues C188, C191, and C194 each contribute to the [4Fe-4S] cluster site. C198 is a [3Fe-4S] cluster binding site. W203 is an a ubiquinone binding site. The [3Fe-4S] cluster site is built by C245 and C251. C255 contributes to the [4Fe-4S] cluster binding site.

The protein belongs to the succinate dehydrogenase/fumarate reductase iron-sulfur protein family. In terms of assembly, component of complex II composed of four subunits: the flavoprotein (FP) SDHA, iron-sulfur protein (IP) SDHB, and a cytochrome b560 composed of SDHC and SDHD. Interacts with SDHAF1; the interaction is required for iron-sulfur cluster incorporation into SDHB. Requires [2Fe-2S] cluster as cofactor. [3Fe-4S] cluster serves as cofactor. [4Fe-4S] cluster is required as a cofactor.

It is found in the mitochondrion inner membrane. The catalysed reaction is a quinone + succinate = fumarate + a quinol. The enzyme catalyses (R)-malate + a quinone = enol-oxaloacetate + a quinol. It catalyses the reaction (S)-malate + a quinone = enol-oxaloacetate + a quinol. It functions in the pathway carbohydrate metabolism; tricarboxylic acid cycle; fumarate from succinate (eukaryal route): step 1/1. Enol-oxaloacetate inhibits the succinate dehydrogenase activity. Its function is as follows. Iron-sulfur protein (IP) subunit of the succinate dehydrogenase complex (mitochondrial respiratory chain complex II), responsible for transferring electrons from succinate to ubiquinone (coenzyme Q). SDH also oxidizes malate to the non-canonical enol form of oxaloacetate, enol-oxaloacetate. Enol-oxaloacetate, which is a potent inhibitor of the succinate dehydrogenase activity, is further isomerized into keto-oxaloacetate. The chain is Succinate dehydrogenase [ubiquinone] iron-sulfur subunit, mitochondrial (Sdhb) from Mus musculus (Mouse).